The chain runs to 266 residues: Phosphatidylglycerol--prolipoprotein diacylglyceryl transferase (266 aa).

7 helical membrane passes run Leu21 to Ala41, Leu60 to Tyr80, Val95 to Trp115, Phe124 to Met144, Ser176 to Ile196, Gly203 to Phe223, and Trp236 to Leu256. Arg143 serves as a coordination point for a 1,2-diacyl-sn-glycero-3-phospho-(1'-sn-glycerol).

Belongs to the Lgt family.

The protein resides in the cell inner membrane. The enzyme catalyses L-cysteinyl-[prolipoprotein] + a 1,2-diacyl-sn-glycero-3-phospho-(1'-sn-glycerol) = an S-1,2-diacyl-sn-glyceryl-L-cysteinyl-[prolipoprotein] + sn-glycerol 1-phosphate + H(+). It participates in protein modification; lipoprotein biosynthesis (diacylglyceryl transfer). Its function is as follows. Catalyzes the transfer of the diacylglyceryl group from phosphatidylglycerol to the sulfhydryl group of the N-terminal cysteine of a prolipoprotein, the first step in the formation of mature lipoproteins. This chain is Phosphatidylglycerol--prolipoprotein diacylglyceryl transferase, found in Photobacterium profundum (strain SS9).